We begin with the raw amino-acid sequence, 274 residues long: 2,3,4,5-tetrahydropyridine-2,6-dicarboxylate N-succinyltransferase (274 aa).

Substrate contacts are provided by Arg104 and Asp141.

The protein belongs to the transferase hexapeptide repeat family. As to quaternary structure, homotrimer.

The protein resides in the cytoplasm. It carries out the reaction (S)-2,3,4,5-tetrahydrodipicolinate + succinyl-CoA + H2O = (S)-2-succinylamino-6-oxoheptanedioate + CoA. The protein operates within amino-acid biosynthesis; L-lysine biosynthesis via DAP pathway; LL-2,6-diaminopimelate from (S)-tetrahydrodipicolinate (succinylase route): step 1/3. The chain is 2,3,4,5-tetrahydropyridine-2,6-dicarboxylate N-succinyltransferase from Shewanella putrefaciens (strain CN-32 / ATCC BAA-453).